A 1872-amino-acid chain; its full sequence is Fatty acid synthase beta subunit pkiC (1872 aa).

The acetyltransferase (AT) domain stretch occupies residues 174–425; sequence VFGGQGECSR…DQSRIPFRDR (252 aa). Positions 591-836 are enoyl reductase (ER) domain; the sequence is NRVLGAPPIM…IIAATPGVSD (246 aa). The segment at 1111 to 1132 is disordered; the sequence is TTPASWSTLSLTERDTSEETSD. A dehydratase (DH) domain region spans residues 1158 to 1597; sequence PSHPLWMRAL…MPLEKLVVEI (440 aa). In terms of domain architecture, MaoC-like spans 1518 to 1617; it reads PPSNEPYAQL…CFSILAKRKE (100 aa).

The protein belongs to the fungal fatty acid synthetase subunit beta family. [Alpha(6)beta(6)] hexamers of two multifunctional subunits (alpha and beta).

The enzyme catalyses acetyl-CoA + n malonyl-CoA + 2n NADPH + 4n H(+) = a long-chain-acyl-CoA + n CoA + n CO2 + 2n NADP(+).. The catalysed reaction is holo-[ACP] + acetyl-CoA = acetyl-[ACP] + CoA. It carries out the reaction holo-[ACP] + malonyl-CoA = malonyl-[ACP] + CoA. It catalyses the reaction a (3R)-hydroxyacyl-[ACP] = a (2E)-enoyl-[ACP] + H2O. The enzyme catalyses a 2,3-saturated acyl-[ACP] + NAD(+) = a (2E)-enoyl-[ACP] + NADH + H(+). The catalysed reaction is (9Z)-octadecenoyl-[ACP] + H2O = (9Z)-octadecenoate + holo-[ACP] + H(+). Its pathway is secondary metabolite biosynthesis. Functionally, fatty acid synthase beta subunit; part of the pki gene cluster that mediates the biosynthesis of 2,4-dihydroxy-3-methyl-6-(2-oxoundecyl)benzaldehyde. The first step in the pathway is the generation of the decanoyl starter unit by the FAS composed of subunits pkiB and pkiC, which is then transferred directly from the FAS to the SAT domain of the non-reducing polyketide synthase pkiA. PkiA condenses the decanoyyl starter unit with 4 malonyl-CoA units and performs one methylation step to yield 2,4-dihydroxy-3-methyl-6-(2-oxoundecyl)benzaldehyde. In Emericella nidulans (strain FGSC A4 / ATCC 38163 / CBS 112.46 / NRRL 194 / M139) (Aspergillus nidulans), this protein is Fatty acid synthase beta subunit pkiC.